A 734-amino-acid chain; its full sequence is Ribosomal RNA large subunit methyltransferase K/L (734 aa).

Residues 49–167 (HAYRICMWSR…KTEHTYCLDL (119 aa)) enclose the THUMP domain.

It belongs to the methyltransferase superfamily. RlmKL family.

The protein resides in the cytoplasm. It catalyses the reaction guanosine(2445) in 23S rRNA + S-adenosyl-L-methionine = N(2)-methylguanosine(2445) in 23S rRNA + S-adenosyl-L-homocysteine + H(+). The catalysed reaction is guanosine(2069) in 23S rRNA + S-adenosyl-L-methionine = N(2)-methylguanosine(2069) in 23S rRNA + S-adenosyl-L-homocysteine + H(+). Functionally, specifically methylates the guanine in position 2445 (m2G2445) and the guanine in position 2069 (m7G2069) of 23S rRNA. The chain is Ribosomal RNA large subunit methyltransferase K/L from Acinetobacter baumannii (strain SDF).